We begin with the raw amino-acid sequence, 953 residues long: Mannosylglycoprotein endo-beta-mannosidase (953 aa).

Glu461 functions as the Proton donor in the catalytic mechanism. Catalysis depends on Glu553, which acts as the Nucleophile.

Belongs to the glycosyl hydrolase 2 family. Heterotrimer of 31 kDa, 28 kDa and 42 kDa subunits. The mature enzyme is proteotically cleaved into 3 subunits of 31 kDa, 28 kDa and 42 kDa. As to expression, ubiquitously expressed.

The enzyme catalyses Hydrolysis of the alpha-D-mannosyl-(1-&gt;6)-beta-D-mannosyl-(1-&gt;4)-N-acetyl-beta-D-glucosaminyl-(1-&gt;4)-N-acetyl-beta-D-glucosaminyl sequence of glycoprotein to alpha-D-mannosyl-(1-&gt;6)-D-mannose and N-acetyl-beta-D-glucosaminyl-(1-&gt;4)-N-acetyl-beta-D-glucosaminyl sequences.. In terms of biological role, glycosidase that specifically hydrolyzes the Man-beta-1,4-GlcNAc linkage in the trimannosyl core structure of N-glycans. Does not hydrolyzes pyridylamino derivatives sugar chains containing Man-alpha-1,3-Man-beta or Xylose-beta-1,2-Man-beta. The protein is Mannosylglycoprotein endo-beta-mannosidase (EBM) of Lilium longiflorum (Trumpet lily).